A 238-amino-acid chain; its full sequence is uncharacterized protein (238 aa).

Residues 1–20 (MPNLHSLPLGTRPENAIRNN) form a disordered region.

Belongs to the PEP2 family.

This is an uncharacterized protein from Emericella nidulans (strain FGSC A4 / ATCC 38163 / CBS 112.46 / NRRL 194 / M139) (Aspergillus nidulans).